The following is a 445-amino-acid chain: Mutanase Pc12g07500 (445 aa).

The N-terminal stretch at 1–21 is a signal peptide; it reads MIWKSLFSALAILTHILPALT. N-linked (GlcNAc...) asparagine glycans are attached at residues Asn-386 and Asn-437.

Belongs to the glycosyl hydrolase 71 family. As to quaternary structure, monomer.

It localises to the secreted. It catalyses the reaction Endohydrolysis of (1-&gt;3)-alpha-D-glucosidic linkages in isolichenin, pseudonigeran and nigeran.. In terms of biological role, hydrolyzes 1,3-alpha-glucan predominantly into pentasaccharides. May enhance the efficacy of fungal antibiotics by degrading bacterial exopolysaccharides. This chain is Mutanase Pc12g07500, found in Penicillium rubens (strain ATCC 28089 / DSM 1075 / NRRL 1951 / Wisconsin 54-1255) (Penicillium chrysogenum).